Reading from the N-terminus, the 483-residue chain is Betaine aldehyde dehydrogenase (483 aa).

K(+) contacts are provided by isoleucine 27 and aspartate 93. 149 to 151 (GAW) is a binding site for NAD(+). Catalysis depends on lysine 161, which acts as the Charge relay system. 175–178 (KPSE) lines the NAD(+) pocket. Valine 179 is a binding site for K(+). Position 228–231 (228–231 (SVPT)) interacts with NAD(+). A K(+)-binding site is contributed by valine 243. Glutamate 249 functions as the Proton acceptor in the catalytic mechanism. Positions 251, 283, and 380 each coordinate NAD(+). Cysteine 283 functions as the Nucleophile in the catalytic mechanism. Cysteine sulfenic acid (-SOH) is present on cysteine 283. The K(+) site is built by lysine 450 and glycine 453. Residue glutamate 457 is the Charge relay system of the active site.

This sequence belongs to the aldehyde dehydrogenase family. In terms of assembly, dimer of dimers. It depends on K(+) as a cofactor.

It catalyses the reaction betaine aldehyde + NAD(+) + H2O = glycine betaine + NADH + 2 H(+). Its pathway is amine and polyamine biosynthesis; betaine biosynthesis via choline pathway; betaine from betaine aldehyde: step 1/1. Involved in the biosynthesis of the osmoprotectant glycine betaine. Catalyzes the irreversible oxidation of betaine aldehyde to the corresponding acid. The sequence is that of Betaine aldehyde dehydrogenase from Cereibacter sphaeroides (strain ATCC 17023 / DSM 158 / JCM 6121 / CCUG 31486 / LMG 2827 / NBRC 12203 / NCIMB 8253 / ATH 2.4.1.) (Rhodobacter sphaeroides).